The sequence spans 43 residues: Bacteriocin weissellin-A (43 aa).

Residues cysteine 9 and cysteine 14 are joined by a disulfide bond.

Its subcellular location is the secreted. In terms of biological role, highly active against Gram-positive bacteria M.flavus strain ATCC 400, M.luteus strain CECT241, C.soprogenes strain NCTC533, L.monocytogenes strain ATCC 19111, L.inocua strain ATCC BAA-680D and S.carnosus strain LMG13564. Less active against B.cereus strain LMG13569, C.thiaminolyticum strain ATCC 15579, E.faecalis strain NCTC8176, L.lactis strain LM0230, L.casei strain ATCC 344, L.lactis strain IL1403, L.jensenii strain ATCC 25258, L.plantarum strain CECT220, L.brevis strain ATCC 8287, L.bulgaricus strain LMG13551, P.acidilactici strain ATCC 25740, P.pentosaceus strain ATCC 33316 and P.pentosaceus strain LMG13560. Weakly active against L.mesenteroides strain ATCC 19254, L.lactis strain ATCC 1454, L.sakei strain CECT906T, L.lactis subsp. cremoris strain MC1363 and L.curvatus strain ATCC 51436. Not active against Gram-negative bacterium S.enteritidis strain ATCC 13076. The mode of action appears to be non-lytic. Inactivated by proteinase K, but insensitive to trypsin, alpha-chymotrypsin, pepsin and papain. This Weissella paramesenteroides (Leuconostoc paramesenteroides) protein is Bacteriocin weissellin-A.